Here is a 243-residue protein sequence, read N- to C-terminus: HTH-type quorum sensing-dependent transcriptional regulator RpaR (243 aa).

The 66-residue stretch at 174 to 239 (KPIRRNRLTP…AAVAKALTLG (66 aa)) folds into the HTH luxR-type domain. Positions 198–217 (AWEISVILCITERTVKFHLI) form a DNA-binding region, H-T-H motif.

This sequence belongs to the autoinducer-regulated transcriptional regulatory protein family.

In terms of biological role, responds to the quorum-sensing autoinducer 4-coumaroyl-homoserine lactone to regulate expression of several genes. Represses expression of rpaI in the absence of the inducer. The sequence is that of HTH-type quorum sensing-dependent transcriptional regulator RpaR from Rhodopseudomonas palustris (strain ATCC BAA-98 / CGA009).